A 337-amino-acid polypeptide reads, in one-letter code: Nucleoid-associated protein HSM_0096 (337 aa).

This sequence belongs to the YejK family.

It localises to the cytoplasm. The protein localises to the nucleoid. The protein is Nucleoid-associated protein HSM_0096 of Histophilus somni (strain 2336) (Haemophilus somnus).